Here is a 189-residue protein sequence, read N- to C-terminus: Elongation factor P (189 aa).

Residue lysine 34 is modified to N6-(3,6-diaminohexanoyl)-5-hydroxylysine.

It belongs to the elongation factor P family. May be beta-lysylated on the epsilon-amino group of Lys-34 by the combined action of EpmA and EpmB, and then hydroxylated on the C5 position of the same residue by EpmC (if this protein is present). Lysylation is critical for the stimulatory effect of EF-P on peptide-bond formation. The lysylation moiety may extend toward the peptidyltransferase center and stabilize the terminal 3-CCA end of the tRNA. Hydroxylation of the C5 position on Lys-34 may allow additional potential stabilizing hydrogen-bond interactions with the P-tRNA.

It is found in the cytoplasm. Its pathway is protein biosynthesis; polypeptide chain elongation. Its function is as follows. Involved in peptide bond synthesis. Alleviates ribosome stalling that occurs when 3 or more consecutive Pro residues or the sequence PPG is present in a protein, possibly by augmenting the peptidyl transferase activity of the ribosome. Modification of Lys-34 is required for alleviation. This chain is Elongation factor P, found in Dichelobacter nodosus (strain VCS1703A).